Consider the following 475-residue polypeptide: Ataxin-10 (475 aa).

Omega-N-methylarginine is present on Arg-10. 2 positions are modified to phosphoserine: Ser-12 and Ser-77. The residue at position 82 (Thr-82) is a Phosphothreonine. Ser-430 bears the Phosphoserine mark.

It belongs to the ataxin-10 family. Homooligomer. Interacts with GNB2. Interacts with IQCB1. Interacts with OGT. In terms of processing, polyubiquitinated. Post-translationally, phosphorylation at Ser-12 by AURKB promotes the association of ATXN10 with PLK1. Phosphorylation at Ser-77 and Thr-82 by PLK1 may play a role in the regulation of cytokinesis and may stimulate the proteasome-mediated degradation of ATXN10.

Its subcellular location is the cytoplasm. It is found in the perinuclear region. It localises to the cytoskeleton. The protein localises to the cilium basal body. The protein resides in the microtubule organizing center. Its subcellular location is the centrosome. It is found in the centriole. It localises to the midbody. In terms of biological role, may play a role in the regulation of cytokinesis. May play a role in signaling by stimulating protein glycosylation. Induces neuritogenesis by activating the Ras-MAP kinase pathway and is necessary for the survival of cerebellar neurons. Does not appear to play a major role in ciliogenesis. This is Ataxin-10 (ATXN10) from Bos taurus (Bovine).